Reading from the N-terminus, the 292-residue chain is NAD kinase (292 aa).

The Proton acceptor role is filled by Asp73. NAD(+)-binding positions include 73 to 74, 147 to 148, His158, Arg175, Asp177, 188 to 193, and Gln248; these read DG, NE, and TGYSLS.

It belongs to the NAD kinase family. The cofactor is a divalent metal cation.

It localises to the cytoplasm. The catalysed reaction is NAD(+) + ATP = ADP + NADP(+) + H(+). Functionally, involved in the regulation of the intracellular balance of NAD and NADP, and is a key enzyme in the biosynthesis of NADP. Catalyzes specifically the phosphorylation on 2'-hydroxyl of the adenosine moiety of NAD to yield NADP. This chain is NAD kinase, found in Buchnera aphidicola subsp. Baizongia pistaciae (strain Bp).